We begin with the raw amino-acid sequence, 357 residues long: Phenylalanine--tRNA ligase alpha subunit (357 aa).

A Mg(2+)-binding site is contributed by Glu257.

It belongs to the class-II aminoacyl-tRNA synthetase family. Phe-tRNA synthetase alpha subunit type 1 subfamily. In terms of assembly, tetramer of two alpha and two beta subunits. Requires Mg(2+) as cofactor.

It localises to the cytoplasm. The catalysed reaction is tRNA(Phe) + L-phenylalanine + ATP = L-phenylalanyl-tRNA(Phe) + AMP + diphosphate + H(+). The chain is Phenylalanine--tRNA ligase alpha subunit from Roseobacter denitrificans (strain ATCC 33942 / OCh 114) (Erythrobacter sp. (strain OCh 114)).